The chain runs to 250 residues: Golgi SNAP receptor complex member 1 (250 aa).

Ala-2 carries the N-acetylalanine modification. The Cytoplasmic segment spans residues 2-229; the sequence is AAGTSNYWED…QRINLRKRRD (228 aa). Residues 9–27 adopt a coiled-coil conformation; the sequence is WEDLRKQARQLENELDLKL. A disordered region spans residues 37 to 59; it reads YSHSGSRDGGRDRYSSDTTPLLN. Residues 41–51 show a composition bias toward basic and acidic residues; the sequence is GSRDGGRDRYS. A coiled-coil region spans residues 72 to 93; it reads IEIEQLLARLTGVNDKMAEYTH. Ser-141 carries the post-translational modification Phosphoserine. A helical; Anchor for type IV membrane protein transmembrane segment spans residues 230–250; sequence SLILGGVIGICTILLLLYAFH.

It belongs to the GOSR1 family. As to quaternary structure, component of several multiprotein Golgi SNARE complexes. Identified in a SNARE complex with BET1, STX5 and YKT6, in a SNARE complex with BET1L, STX5 and YKT6, in a SNARE complex with STX5, GOSR2, SEC22B and BET1, and in complex with STX5 and COG3. Interacts with GABARAPL2.

Its subcellular location is the golgi apparatus membrane. Its function is as follows. Involved in transport from the ER to the Golgi apparatus as well as in intra-Golgi transport. It belongs to a super-family of proteins called t-SNAREs or soluble NSF (N-ethylmaleimide-sensitive factor) attachment protein receptor. May play a protective role against hydrogen peroxide induced cytotoxicity under glutathione depleted conditions in neuronal cells by regulating the intracellular ROS levels via inhibition of p38 MAPK (MAPK11, MAPK12, MAPK13 and MAPK14). Participates in docking and fusion stage of ER to cis-Golgi transport. Plays an important physiological role in VLDL-transport vesicle-Golgi fusion and thus in VLDL delivery to the hepatic cis-Golgi. The polypeptide is Golgi SNAP receptor complex member 1 (Gosr1) (Mus musculus (Mouse)).